The chain runs to 623 residues: Translation initiation factor IF-2 (623 aa).

Positions 1–18 (MTLNKKTNNENSSKTTPK) are enriched in low complexity. 2 disordered regions span residues 1-21 (MTLNKKTNNENSSKTTPKLSK) and 92-115 (PQKEQTPPQLQPQKPPLTKSKLQA). Residues 125 to 293 (KTPPIVTIMG…ILLFSEIQNL (169 aa)) form the tr-type G domain. The G1 stretch occupies residues 134-141 (GHVDHGKT). 134–141 (GHVDHGKT) is a binding site for GTP. Positions 159–163 (GITQH) are G2. Residues 180 to 183 (DTPG) form a G3 region. GTP-binding positions include 180–184 (DTPGH) and 234–237 (NKVD). Positions 234–237 (NKVD) are G4. The interval 270-272 (SAL) is G5.

This sequence belongs to the TRAFAC class translation factor GTPase superfamily. Classic translation factor GTPase family. IF-2 subfamily.

The protein localises to the cytoplasm. In terms of biological role, one of the essential components for the initiation of protein synthesis. Protects formylmethionyl-tRNA from spontaneous hydrolysis and promotes its binding to the 30S ribosomal subunits. Also involved in the hydrolysis of GTP during the formation of the 70S ribosomal complex. This chain is Translation initiation factor IF-2, found in Aster yellows witches'-broom phytoplasma (strain AYWB).